Here is a 308-residue protein sequence, read N- to C-terminus: Probable GTP 3',8-cyclase (308 aa).

Positions 4–224 (RFGRPLEDLR…QIRKKHFRPR (221 aa)) constitute a Radical SAM core domain. R13 contributes to the GTP binding site. Positions 20, 24, and 27 each coordinate [4Fe-4S] cluster. K60 contributes to the GTP binding site. G64 lines the S-adenosyl-L-methionine pocket. T90 contacts GTP. S114 contributes to the S-adenosyl-L-methionine binding site. K151 is a binding site for GTP. The [4Fe-4S] cluster site is built by C245 and C248. 250–252 (RIR) serves as a coordination point for GTP. Position 262 (C262) interacts with [4Fe-4S] cluster.

This sequence belongs to the radical SAM superfamily. MoaA family. It depends on [4Fe-4S] cluster as a cofactor.

The enzyme catalyses GTP + AH2 + S-adenosyl-L-methionine = (8S)-3',8-cyclo-7,8-dihydroguanosine 5'-triphosphate + 5'-deoxyadenosine + L-methionine + A + H(+). The protein operates within cofactor biosynthesis; molybdopterin biosynthesis. Catalyzes the cyclization of GTP to (8S)-3',8-cyclo-7,8-dihydroguanosine 5'-triphosphate. The protein is Probable GTP 3',8-cyclase of Saccharolobus islandicus (strain L.S.2.15 / Lassen #1) (Sulfolobus islandicus).